A 230-amino-acid chain; its full sequence is Orotidine 5'-phosphate decarboxylase (230 aa).

Substrate-binding positions include aspartate 10, lysine 32, 59–68 (DLKYHDIPNT), threonine 119, arginine 180, glutamine 189, glycine 209, and arginine 210. Lysine 61 acts as the Proton donor in catalysis.

Belongs to the OMP decarboxylase family. Type 1 subfamily. In terms of assembly, homodimer.

The catalysed reaction is orotidine 5'-phosphate + H(+) = UMP + CO2. It functions in the pathway pyrimidine metabolism; UMP biosynthesis via de novo pathway; UMP from orotate: step 2/2. In terms of biological role, catalyzes the decarboxylation of orotidine 5'-monophosphate (OMP) to uridine 5'-monophosphate (UMP). The polypeptide is Orotidine 5'-phosphate decarboxylase (Haemophilus influenzae (strain ATCC 51907 / DSM 11121 / KW20 / Rd)).